The chain runs to 711 residues: Choline transporter-like protein 2 (711 aa).

Over 1-33 (MGDERPHYYGKHGTPQKYDPTFKGPIYNRGCTD) the chain is Cytoplasmic. Thr-14 is subject to Phosphothreonine. Residues 34 to 54 (VICCVFLLVAIVGYVAVGIIA) traverse the membrane as a helical segment. The Extracellular segment spans residues 55–232 (WTHGDPRKVI…RIFEDYTVSW (178 aa)). Asn-187 and Asn-200 each carry an N-linked (GlcNAc...) asparagine glycan. Residues 233-253 (YWIIIGLVIAMAMSLLFIILL) form a helical membrane-spanning segment. The Cytoplasmic portion of the chain corresponds to 254–256 (RFL). Residues 257–277 (AGIMVWVMIIMVILVLGYGIF) traverse the membrane as a helical segment. The Extracellular segment spans residues 278–315 (HCYMEYSRLRGEAGSDVSLVDLGFQTDFRVYLHLRQTW). The chain crosses the membrane as a helical span at residues 316 to 336 (LAFMIILSILEVIIILLLIFL). At 337 to 364 (RKRILIAIALIKEASRAVGYVMCTMLYP) the chain is on the cytoplasmic side. Residues 365–385 (LVTFFLLCLCIAYWASTAVFL) traverse the membrane as a helical segment. At 386 to 440 (STSNEAVYKIFDDGLCPFTAKTCNPETFPSSNESRQCPNARCQFAFYGGESGYHR) the chain is on the extracellular side. A glycan (N-linked (GlcNAc...) asparagine) is linked at Asn-417. A helical transmembrane segment spans residues 441 to 461 (ALLGLQIFNAFMFFWLANFVL). Topologically, residues 462–504 (ALGQVTLAGAFASYYWALRKPDDLPAFPLFSAFGRALRYHTGS) are cytoplasmic. Residues 505–525 (LAFGALILAIVQIIRVILEYL) traverse the membrane as a helical segment. Residues 526–563 (DQRLKAAENKFAKCLMTCLKCCFWCLEKFIKFLNRNAY) are Extracellular-facing. The chain crosses the membrane as a helical span at residues 564-584 (IMIAIYGTNFCTSARNAFFLL). Over 585–599 (MRNIIRVAVLDKVTD) the chain is Cytoplasmic. A helical transmembrane segment spans residues 600-620 (FLFLLGKLLIVGSVGILAFFF). Over 621 to 638 (FTHRIRIVQDTAPPLNYY) the chain is Extracellular. The chain crosses the membrane as a helical span at residues 639–659 (WVPILTVIVGSYLIAHGFFSV). The Cytoplasmic segment spans residues 660 to 711 (YGMCVDTLFLCFCEDLERNDGSQERPYFMSPELRDILLKGSAEEGKRAEAEE).

The protein belongs to the CTL (choline transporter-like) family. Interacts with COCH. N-glycosylated.

It localises to the cell membrane. The protein resides in the mitochondrion outer membrane. It catalyses the reaction choline(out) + n H(+)(in) = choline(in) + n H(+)(out). It carries out the reaction ethanolamine(out) + n H(+)(in) = ethanolamine(in) + n H(+)(out). Functionally, choline/H+ antiporter, mainly in mitochodria. Also acts as a low-affinity ethanolamine/H+ antiporter, regulating the supply of extracellular ethanolamine (Etn) for the CDP-Etn pathway, redistribute intracellular Etn and balance the CDP-Cho and CDP-Etn arms of the Kennedy pathway. The sequence is that of Choline transporter-like protein 2 (SLC44A2) from Pongo abelii (Sumatran orangutan).